The primary structure comprises 732 residues: Ubiquitin carboxyl-terminal hydrolase 21 (732 aa).

A compositionally biased stretch (pro residues) spans 1 to 10; it reads MAEFSDPPPS. The interval 1-111 is disordered; that stretch reads MAEFSDPPPS…ISPVSNNNHL (111 aa). 2 stretches are compositionally biased toward polar residues: residues 11–31 and 38–53; these read NLSS…SSPT and VTNS…QIQA. Residues 55-69 are compositionally biased toward low complexity; that stretch reads SPAKPDGSSSSPPDK. In terms of domain architecture, USP spans 163–469; that stretch reads AGLYNSGNTC…PAYILFYARE (307 aa). Catalysis depends on Cys172, which acts as the Nucleophile. His428 serves as the catalytic Proton acceptor. The tract at residues 534–732 is disordered; the sequence is KEEVFHSAES…SSNMRRSIKL (199 aa). The segment covering 540–551 has biased composition (low complexity); that stretch reads SAESSNNEDSSA. Basic and acidic residues predominate over residues 583 to 609; sequence AYIDKSEKPFAETSQPKEPKPFADRAS. Positions 719–732 are enriched in basic residues; sequence KKKKSSNMRRSIKL.

This sequence belongs to the peptidase C19 family.

The enzyme catalyses Thiol-dependent hydrolysis of ester, thioester, amide, peptide and isopeptide bonds formed by the C-terminal Gly of ubiquitin (a 76-residue protein attached to proteins as an intracellular targeting signal).. Functionally, recognizes and hydrolyzes the peptide bond at the C-terminal Gly of ubiquitin. Involved in the processing of poly-ubiquitin precursors as well as that of ubiquitinated proteins. This is Ubiquitin carboxyl-terminal hydrolase 21 (UBP21) from Arabidopsis thaliana (Mouse-ear cress).